The chain runs to 312 residues: Olfactory receptor-like protein COR6 (312 aa).

At 1–26 (MASGNCTTPTTFILSGLTDNPGLQMP) the chain is on the extracellular side. Asn-5 carries an N-linked (GlcNAc...) asparagine glycan. A helical membrane pass occupies residues 27-49 (LFMVFLAIYTITLLTNLGLIALI). The Cytoplasmic portion of the chain corresponds to 50 to 57 (SIDLQLQT). Residues 58 to 79 (PMYIFLQNLSFTDAVYSTVITP) form a helical membrane-spanning segment. Over 80 to 100 (KMLATFLEETKTISYVGCILQ) the chain is Extracellular. Residues Cys-97 and Cys-179 are joined by a disulfide bond. Residues 101 to 120 (YFSFVLLTVRECLLLAVMAY) traverse the membrane as a helical segment. Residues 121–139 (DRYAAICKPLLYPAIMTKA) are Cytoplasmic-facing. Residues 140-164 (VCWRLVKGLYSLAFLNFLVHTSGLL) traverse the membrane as a helical segment. Topologically, residues 165-205 (KLSFCSSNVVNHFFCDNSPLFQISSSSTALNELLVFIFGSL) are extracellular. The helical transmembrane segment at 206-226 (FVMSSIITILISYVFIILTVV) threads the bilayer. Over 227-239 (RIRSKERKYKAFS) the chain is Cytoplasmic. The helical transmembrane segment at 240–260 (TCTSHLMAVSLFHGTIVFMYF) threads the bilayer. At 261–271 (QPANNFSLDKD) the chain is on the extracellular side. A helical transmembrane segment spans residues 272–292 (KIMSLFYTVVIPMLNPLIYSW). At 293 to 312 (RNKEVKDALHRAIATAVLFH) the chain is on the cytoplasmic side.

This sequence belongs to the G-protein coupled receptor 1 family.

The protein localises to the cell membrane. Its function is as follows. Odorant receptor. In Gallus gallus (Chicken), this protein is Olfactory receptor-like protein COR6 (COR6).